A 361-amino-acid polypeptide reads, in one-letter code: tRNA/tmRNA (uracil-C(5))-methyltransferase (361 aa).

S-adenosyl-L-methionine contacts are provided by Gln183, Tyr211, Asn216, Glu232, and Asp294. Cys319 serves as the catalytic Nucleophile. Glu353 serves as the catalytic Proton acceptor.

It belongs to the class I-like SAM-binding methyltransferase superfamily. RNA M5U methyltransferase family. TrmA subfamily.

It carries out the reaction uridine(54) in tRNA + S-adenosyl-L-methionine = 5-methyluridine(54) in tRNA + S-adenosyl-L-homocysteine + H(+). It catalyses the reaction uridine(341) in tmRNA + S-adenosyl-L-methionine = 5-methyluridine(341) in tmRNA + S-adenosyl-L-homocysteine + H(+). Its function is as follows. Dual-specificity methyltransferase that catalyzes the formation of 5-methyluridine at position 54 (m5U54) in all tRNAs, and that of position 341 (m5U341) in tmRNA (transfer-mRNA). The polypeptide is tRNA/tmRNA (uracil-C(5))-methyltransferase (Acinetobacter baumannii (strain ACICU)).